The sequence spans 296 residues: 4-hydroxybenzoate octaprenyltransferase (296 aa).

8 helical membrane passes run 29–49 (IGVY…GKGA), 52–72 (LQTV…GCVI), 102–122 (ALVL…FTNA), 146–166 (YYPQ…AFTA), 169–189 (GELP…TVGY), 219–239 (VIIL…GARF), 241–261 (LGAC…WEFW), and 275–295 (FLHN…DYAV).

The protein belongs to the UbiA prenyltransferase family. Mg(2+) is required as a cofactor.

It is found in the cell inner membrane. The catalysed reaction is all-trans-octaprenyl diphosphate + 4-hydroxybenzoate = 4-hydroxy-3-(all-trans-octaprenyl)benzoate + diphosphate. Its pathway is cofactor biosynthesis; ubiquinone biosynthesis. Functionally, catalyzes the prenylation of para-hydroxybenzoate (PHB) with an all-trans polyprenyl group. Mediates the second step in the final reaction sequence of ubiquinone-8 (UQ-8) biosynthesis, which is the condensation of the polyisoprenoid side chain with PHB, generating the first membrane-bound Q intermediate 3-octaprenyl-4-hydroxybenzoate. This Pseudomonas syringae pv. syringae (strain B728a) protein is 4-hydroxybenzoate octaprenyltransferase.